A 307-amino-acid chain; its full sequence is Oxygen-dependent coproporphyrinogen-III oxidase (307 aa).

S99 contacts substrate. Residues H103 and H113 each coordinate a divalent metal cation. The active-site Proton donor is H113. Position 115 to 117 (115 to 117) interacts with substrate; that stretch reads NVR. Positions 152 and 182 each coordinate a divalent metal cation. The important for dimerization stretch occupies residues 247 to 282; that stretch reads YVEFNLVFDRGTLFGLQSGGRTESILMSMPPVANWR. 265–267 serves as a coordination point for substrate; the sequence is GGR.

This sequence belongs to the aerobic coproporphyrinogen-III oxidase family. As to quaternary structure, homodimer. The cofactor is a divalent metal cation.

It localises to the cytoplasm. The catalysed reaction is coproporphyrinogen III + O2 + 2 H(+) = protoporphyrinogen IX + 2 CO2 + 2 H2O. The protein operates within porphyrin-containing compound metabolism; protoporphyrin-IX biosynthesis; protoporphyrinogen-IX from coproporphyrinogen-III (O2 route): step 1/1. In terms of biological role, involved in the heme biosynthesis. Catalyzes the aerobic oxidative decarboxylation of propionate groups of rings A and B of coproporphyrinogen-III to yield the vinyl groups in protoporphyrinogen-IX. This is Oxygen-dependent coproporphyrinogen-III oxidase from Burkholderia cenocepacia (strain ATCC BAA-245 / DSM 16553 / LMG 16656 / NCTC 13227 / J2315 / CF5610) (Burkholderia cepacia (strain J2315)).